A 415-amino-acid polypeptide reads, in one-letter code: Cysteate synthase (415 aa).

K104 carries the post-translational modification N6-(pyridoxal phosphate)lysine. N131 and T376 together coordinate pyridoxal 5'-phosphate.

It belongs to the threonine synthase family. Cysteate synthase subfamily. In terms of assembly, homotrimer. Requires pyridoxal 5'-phosphate as cofactor.

It carries out the reaction O-phospho-L-serine + sulfite + H(+) = L-cysteate + phosphate. The protein operates within cofactor biosynthesis; coenzyme M biosynthesis. Specifically catalyzes the beta-elimination of phosphate from L-phosphoserine and the beta-addition of sulfite to the dehydroalanine intermediate to produce L-cysteate. This chain is Cysteate synthase, found in Methanothrix thermoacetophila (strain DSM 6194 / JCM 14653 / NBRC 101360 / PT) (Methanosaeta thermophila).